A 661-amino-acid polypeptide reads, in one-letter code: MKLPTLGKCVVRTLMGAVALGAISVNAQTLSSNSTGTNNGFYYTFWKDSGDASMTLLSGGRYQSSWGNSTNNWVGGKGWNPGNNSRVISYSGSYGVDSSQNSYLALYGWTRSPLIEYYVIESYGSYNPASCSGGTDYGSFQSDGATYNVRRCQRVNQPSIDGTQTFYQYFSVRNPKKGFGNISGTITFANHVNFWASKGLNLGNHNYQVLATEGYQSRGSSDITVSEGTSGGGTSSVGGASSSVNSSTGGGSSGGITVRARGANGSEHINLRVGGAVVANWTLGTSFQNYLYSGNASGDIQVQFDNDASGRDVVVDYIIVNGETRQAEDMEHNSAVYANGRCGGGSYSENMHCNGEIGFGYTYDCFSGNCSGGNGGSNSSAGNSSSGNTGGGGSNCSGYVGITFDDGPNSNTATLVNLLRQNNLTPVTWFNQGNNVASNAHLMSQQLSVGEVHNHSYTHPHMTSWTYQQVYDELNRTNQAIQNAGAPKPTLFRPPYGELNSTIQQAAQALGLRVVTWDVDSQDWNGASAAAIANAANQLQNGQVILMHDGSYTNTNSAIAQIATNLRAKGLCPGRIDPNTGRAVAPSSSGGSSSVALSSSSRSSSSAGGNTGGNCQCNWWGTFYPLCQTQTSGWGWENSRSCISTSTCNSQGTGGGGVVCN.

Residues 1–27 (MKLPTLGKCVVRTLMGAVALGAISVNA) form the signal peptide. The 198-residue stretch at 29-226 (TLSSNSTGTN…SRGSSDITVS (198 aa)) folds into the GH11 domain. E116 serves as the catalytic Nucleophile; for endoxylanase activity. Catalysis depends on E213, which acts as the Proton donor; for endoxylanase activity. The disordered stretch occupies residues 220–259 (SSDITVSEGTSGGGTSSVGGASSSVNSSTGGGSSGGITVR). Low complexity predominate over residues 237 to 247 (VGGASSSVNSS). Residues 394 to 577 (SNCSGYVGIT…AKGLCPGRID (184 aa)) are polysaccharide deacetylase. In terms of domain architecture, NodB homology spans 398 to 574 (GYVGITFDDG…NLRAKGLCPG (177 aa)). Residues 578 to 610 (PNTGRAVAPSSSGGSSSVALSSSSRSSSSAGGN) form a disordered region. Low complexity predominate over residues 581 to 608 (GRAVAPSSSGGSSSVALSSSSRSSSSAG). A CBM10 domain is found at 616 to 645 (QCNWWGTFYPLCQTQTSGWGWENSRSCIST).

In the N-terminal section; belongs to the glycosyl hydrolase 11 (cellulase G) family.

It localises to the secreted. The enzyme catalyses Endohydrolysis of (1-&gt;4)-beta-D-xylosidic linkages in xylans.. It catalyses the reaction Deacetylation of xylans and xylo-oligosaccharides.. It functions in the pathway glycan degradation; xylan degradation. Functionally, endo-acting xylanase which specifically cleaves internal linkages on the xylan backbone, releasing xylooligosaccharides. Is able to hydrolyze oat spelt xylan and the arabinoxylans from wheat and rye, releasing xylobiose as the major product. Also likely catalyzes, via its C-terminal domain, the removal of acetyl groups from acetylated xylan. Thus, has the capability of hydrolyzing acetylated xylan. Does not attack mannan, galactan, arabinan or any cellulosic substrates. This is Bifunctional xylanase/xylan deacetylase (xyn11A) from Cellvibrio japonicus (Pseudomonas fluorescens subsp. cellulosa).